A 730-amino-acid polypeptide reads, in one-letter code: Envelope glycoprotein H (730 aa).

The N-terminal stretch at Met-1–Gly-21 is a signal peptide. The Virion surface segment spans residues Ala-22–Leu-706. N-linked (GlcNAc...) asparagine; by host glycans are attached at residues Asn-46, Asn-54, Asn-101, Asn-125, Asn-131, Asn-188, Asn-209, Asn-215, Asn-267, Asn-274, Asn-365, Asn-556, Asn-613, Asn-626, and Asn-688. The interaction with gL stretch occupies residues Ser-190–Ile-254. Residues Phe-707–Ser-727 form a helical membrane-spanning segment. The Intravirion segment spans residues Ile-728–Tyr-730.

Belongs to the herpesviridae glycoprotein H family. As to quaternary structure, interacts with glycoprotein L (gL); this interaction is necessary for the correct processing and cell surface expression of gH. The heterodimer gH/gL seems to interact with gB trimers during fusion. When in complex with gL, interacts with host EPHA2; this interaction triggers EPHA2 phosphorylation and endocytosis allowing KSHV entry. N-glycosylated, O-glycosylated, and sialylated.

It localises to the virion membrane. The protein resides in the host cell membrane. The protein localises to the host endosome membrane. Functionally, the heterodimer glycoprotein H-glycoprotein L is required for the fusion of viral and plasma membranes leading to virus entry into the host cell. Following initial binding to host receptor, membrane fusion is mediated by the fusion machinery composed of gB and the heterodimer gH/gL. May also be involved in the fusion between the virion envelope and the outer nuclear membrane during virion morphogenesis. Targets host EPHA2 to promote KSHV entry. This Homo sapiens (Human) protein is Envelope glycoprotein H.